The sequence spans 428 residues: Flotillin-1 (428 aa).

A phosphoserine mark is found at serine 19, serine 163, and serine 385. Residue threonine 387 is modified to Phosphothreonine.

The protein belongs to the band 7/mec-2 family. Flotillin subfamily. As to quaternary structure, heterooligomeric complex of flotillin-1 and flotillin-2 and caveolin-1 and caveolin-2. Interacts with ECPAS. High expression in brain, white adipose tissue, heart muscle, skeletal muscle and lung. Low expression in spleen, liver and testis.

The protein localises to the cell membrane. It is found in the endosome. Its subcellular location is the membrane. The protein resides in the caveola. It localises to the melanosome. The protein localises to the membrane raft. Its function is as follows. May act as a scaffolding protein within caveolar membranes, functionally participating in formation of caveolae or caveolae-like vesicles. This chain is Flotillin-1 (Flot1), found in Mus musculus (Mouse).